Consider the following 223-residue polypeptide: Small ribosomal subunit protein uS3 (223 aa).

Positions 39-107 (IRQFLRKKPS…EVWLEIAEIK (69 aa)) constitute a KH type-2 domain.

It belongs to the universal ribosomal protein uS3 family. Part of the 30S ribosomal subunit. Forms a tight complex with proteins S10 and S14.

In terms of biological role, binds the lower part of the 30S subunit head. Binds mRNA in the 70S ribosome, positioning it for translation. The chain is Small ribosomal subunit protein uS3 from Chlamydia pneumoniae (Chlamydophila pneumoniae).